Consider the following 493-residue polypeptide: Betaine aldehyde dehydrogenase (493 aa).

K(+)-binding residues include S32, I33, and D99. An NAD(+)-binding site is contributed by 156 to 158 (GAW). Residue K168 is the Charge relay system of the active site. Residues 182-185 (KPSE) and 235-238 (SVPT) each bind NAD(+). K(+) is bound at residue L250. The active-site Proton acceptor is the E256. Residues G258, C290, and E390 each contribute to the NAD(+) site. C290 (nucleophile) is an active-site residue. A Cysteine sulfenic acid (-SOH) modification is found at C290. Positions 460 and 463 each coordinate K(+). E467 (charge relay system) is an active-site residue.

Belongs to the aldehyde dehydrogenase family. As to quaternary structure, dimer of dimers. The cofactor is K(+).

The catalysed reaction is betaine aldehyde + NAD(+) + H2O = glycine betaine + NADH + 2 H(+). The protein operates within amine and polyamine biosynthesis; betaine biosynthesis via choline pathway; betaine from betaine aldehyde: step 1/1. Involved in the biosynthesis of the osmoprotectant glycine betaine. Catalyzes the irreversible oxidation of betaine aldehyde to the corresponding acid. This is Betaine aldehyde dehydrogenase from Agrobacterium fabrum (strain C58 / ATCC 33970) (Agrobacterium tumefaciens (strain C58)).